A 173-amino-acid polypeptide reads, in one-letter code: Tumor necrosis factor ligand superfamily member 18 (173 aa).

The Cytoplasmic portion of the chain corresponds to 1-20 (MEEMPLRESSPQRAERCKKS). The helical; Signal-anchor for type II membrane protein transmembrane segment at 21 to 41 (WLLCIVALLLMLLCSLGTLIY) threads the bilayer. A THD domain is found at 40-166 (IYTSLKPTAI…TNTYWGIILM (127 aa)). Over 42–173 (TSLKPTAIES…ILMPDLPFIS (132 aa)) the chain is Extracellular. A disulfide bridge connects residues Cys52 and Cys72. The N-linked (GlcNAc...) asparagine glycan is linked to Asn74.

This sequence belongs to the tumor necrosis factor family. Homotrimer. Homodimer. Post-translationally, N-glycosylated. In terms of tissue distribution, detected in immature and mature dendritic cells and in macrophages (at protein level). Detected in spleen, lung, heart, thymus, monocytes, macrophages, B-cells and dendritic cells.

It localises to the cell membrane. Cytokine that binds to TNFRSF18/AITR/GITR. Regulates T-cell responses. Can function as costimulator and lower the threshold for T-cell activation and T-cell proliferation. Important for interactions between activated T-lymphocytes and endothelial cells. Mediates activation of NF-kappa-B. Triggers increased phosphorylation of STAT1 and up-regulates expression of VCAM1 and ICAM1. Promotes leukocyte adhesion to endothelial cells. Regulates migration of monocytes from the splenic reservoir to sites of inflammation. The protein is Tumor necrosis factor ligand superfamily member 18 (Tnfsf18) of Mus musculus (Mouse).